The chain runs to 285 residues: Cytosolic Fe-S cluster assembly factor CFD1 (285 aa).

30-37 (GKGGVGKS) is an ATP binding site. Residues cysteine 206 and cysteine 209 each contribute to the [4Fe-4S] cluster site.

Belongs to the Mrp/NBP35 ATP-binding proteins family. NUBP2/CFD1 subfamily. In terms of assembly, heterotetramer of 2 NBP35 and 2 CFD1 chains. [4Fe-4S] cluster serves as cofactor.

Its subcellular location is the cytoplasm. In terms of biological role, component of the cytosolic iron-sulfur (Fe/S) protein assembly (CIA) machinery. Required for maturation of extramitochondrial Fe-S proteins. The NBP35-CFD1 heterotetramer forms a Fe-S scaffold complex, mediating the de novo assembly of an Fe-S cluster and its transfer to target apoproteins. Required for biogenesis and export of both ribosomal subunits, which may reflect a role in assembly of the Fe/S clusters in RLI1, a protein which performs rRNA processing and ribosome export. This Candida glabrata (strain ATCC 2001 / BCRC 20586 / JCM 3761 / NBRC 0622 / NRRL Y-65 / CBS 138) (Yeast) protein is Cytosolic Fe-S cluster assembly factor CFD1.